A 281-amino-acid chain; its full sequence is Merozoite surface protein 2 (281 aa).

A signal peptide spans 1 to 20; sequence MKVIKTLSIINFFIFVTFNI. N-linked (GlcNAc...) asparagine glycosylation is found at asparagine 22 and asparagine 36. Positions 42 to 242 are disordered; sequence SMEESNPPTG…DSQKECTDGN (201 aa). The polymorphic region stretch occupies residues 44 to 207; the sequence is EESNPPTGAS…EQTESPELQS (164 aa). A run of 3 repeats spans residues 51 to 58, 59 to 66, and 67 to 74. The interval 51–74 is 3 X 8 AA tandem repeats of G-A-S-G-R-A-G-A; the sequence is GASGRAGAGASGRAGAGASGRAGA. Residues 54-76 are compositionally biased toward gly residues; the sequence is GRAGAGASGRAGAGASGRAGAGA. Over residues 77–133 the composition is skewed to low complexity; it reads GAVASAGSGDGAVASAGNGANPGADAKRSTSTPATTTTTTTTNDAEASTSTSSENPN. Composition is skewed to polar residues over residues 150–174 and 181–209; these read NKANTETQNNSNVQQDSQTKSNVPP and KSPTAQPEQAENSAPTAEQTESPELQSAP. The N-linked (GlcNAc...) asparagine glycan is linked to asparagine 158. The N-linked (GlcNAc...) asparagine glycan is linked to asparagine 230. Cysteine 238 and cysteine 246 are oxidised to a cystine. N-linked (GlcNAc...) asparagine glycosylation is found at asparagine 254 and asparagine 255. Asparagine 255 carries the GPI-anchor amidated asparagine lipid modification. The propeptide at 256 to 281 is removed in mature form; sequence SSNIASINKFVVLISATLVLSFAIFI.

Its subcellular location is the cell membrane. In terms of biological role, may play a role in the merozoite attachment to the erythrocyte. This Plasmodium falciparum (isolate thtn / Thailand) protein is Merozoite surface protein 2.